The primary structure comprises 483 residues: Probable gamma-aminobutyrate transaminase 4 (483 aa).

138-139 serves as a coordination point for pyridoxal 5'-phosphate; that stretch reads GS. Tyr171 is a binding site for substrate. Position 278 (Asp278) interacts with pyridoxal 5'-phosphate. Lys307 is a substrate binding site. Lys307 is modified (N6-(pyridoxal phosphate)lysine).

It belongs to the class-III pyridoxal-phosphate-dependent aminotransferase family. Not detected in roots, stems, flowers or leaves of healthy plants.

The protein localises to the cytoplasm. The catalysed reaction is 4-aminobutanoate + pyruvate = succinate semialdehyde + L-alanine. The enzyme catalyses 4-aminobutanoate + glyoxylate = succinate semialdehyde + glycine. In terms of biological role, transaminase that degrades gamma-amino butyric acid (GABA). The chain is Probable gamma-aminobutyrate transaminase 4 (GABA-T) from Oryza sativa subsp. japonica (Rice).